Consider the following 333-residue polypeptide: DNA-directed RNA polymerase subunit alpha (333 aa).

Residues 1-251 (MEKLTKIKHR…AHFQTIGDLT (251 aa)) form an alpha N-terminal domain (alpha-NTD) region. An alpha C-terminal domain (alpha-CTD) region spans residues 272–333 (DMEIRLLNLS…KLNEYGKLKN (62 aa)).

This sequence belongs to the RNA polymerase alpha chain family. As to quaternary structure, homodimer. The RNAP catalytic core consists of 2 alpha, 1 beta, 1 beta' and 1 omega subunit. When a sigma factor is associated with the core the holoenzyme is formed, which can initiate transcription.

The catalysed reaction is RNA(n) + a ribonucleoside 5'-triphosphate = RNA(n+1) + diphosphate. In terms of biological role, DNA-dependent RNA polymerase catalyzes the transcription of DNA into RNA using the four ribonucleoside triphosphates as substrates. The protein is DNA-directed RNA polymerase subunit alpha of Mycoplasmopsis synoviae (strain 53) (Mycoplasma synoviae).